A 374-amino-acid polypeptide reads, in one-letter code: tRNA (guanine(26)-N(2))-dimethyltransferase (374 aa).

The 365-residue stretch at isoleucine 4–isoleucine 368 folds into the Trm1 methyltransferase domain. Residues arginine 41, arginine 66, aspartate 82, aspartate 108, and alanine 109 each contribute to the S-adenosyl-L-methionine site. The Zn(2+) site is built by cysteine 237, cysteine 240, cysteine 256, and cysteine 259.

This sequence belongs to the class I-like SAM-binding methyltransferase superfamily. Trm1 family.

The catalysed reaction is guanosine(26) in tRNA + 2 S-adenosyl-L-methionine = N(2)-dimethylguanosine(26) in tRNA + 2 S-adenosyl-L-homocysteine + 2 H(+). Dimethylates a single guanine residue at position 26 of a number of tRNAs using S-adenosyl-L-methionine as donor of the methyl groups. The chain is tRNA (guanine(26)-N(2))-dimethyltransferase from Methanoregula boonei (strain DSM 21154 / JCM 14090 / 6A8).